Here is a 397-residue protein sequence, read N- to C-terminus: Leucine carboxyl methyltransferase 1 (397 aa).

Positions A17 to L61 are disordered. Over residues P26–C43 the composition is skewed to low complexity. The span at R44 to P55 shows a compositional bias: basic residues. S-adenosyl-L-methionine-binding positions include R119, G142, D168, D224–L225, and E259.

Belongs to the methyltransferase superfamily. LCMT family.

It carries out the reaction [phosphatase 2A protein]-C-terminal L-leucine + S-adenosyl-L-methionine = [phosphatase 2A protein]-C-terminal L-leucine methyl ester + S-adenosyl-L-homocysteine. Methylates the carboxyl group of the C-terminal leucine residue of protein phosphatase 2A catalytic subunits to form alpha-leucine ester residues. The protein is Leucine carboxyl methyltransferase 1 (PPM1) of Cryptococcus neoformans var. neoformans serotype D (strain B-3501A) (Filobasidiella neoformans).